A 399-amino-acid chain; its full sequence is O-glucosyltransferase rumi homolog (399 aa).

The signal sequence occupies residues 1 to 18; that stretch reads MHFIIGIVICLSLSVIQS. 2 N-linked (GlcNAc...) asparagine glycosylation sites follow: Asn19 and Asn67. 4 disulfides stabilise this stretch: Cys66–Cys73, Cys71–Cys373, Cys118–Cys124, and Cys277–Cys300. Residue Asp149 is the Proton donor/acceptor of the active site. Residues 189–194 are interaction with the consensus sequence C-X-S-X-[PA]-C in peptide substrates; that stretch reads AIALYP. Residues 224–228, Arg232, 271–273, and 289–293 each bind UDP-alpha-D-glucose; these read RGSRT, VTL, and AASFR.

The protein belongs to the glycosyltransferase 90 family.

It localises to the endoplasmic reticulum lumen. It is found in the secreted. The protein operates within protein modification; protein glycosylation. Its function is as follows. Protein O-glucosyltransferase. Catalyzes the reaction that attaches glucose through an O-glycosidic linkage to a conserved serine residue found in the consensus sequence C-X-S-X-[PA]-C in epidermal growth factor-like repeats. Regulates Notch signaling by glucosylating Notch in the ER, glucosylation is required for the correct folding and cleavage of Notch. This chain is O-glucosyltransferase rumi homolog, found in Anopheles gambiae (African malaria mosquito).